Reading from the N-terminus, the 414-residue chain is Serine/threonine transporter SstT (414 aa).

The Cytoplasmic segment spans residues 2-15 (TTQHSPGLFRRLAH). The helical transmembrane segment at 16–36 (GSLVKQILAGLILGILLAWIS) threads the bilayer. Topologically, residues 37–45 (KPAAEAVGL) are periplasmic. A helical membrane pass occupies residues 46 to 66 (LGTLFVGALKAVAPILVLMLV). Topologically, residues 67–83 (MASIANHQHGQKTNIRP) are cytoplasmic. The chain crosses the membrane as a helical span at residues 84–104 (ILFLYLLGTFSAALAAVIFSF). The Periplasmic segment spans residues 105-142 (AFPSTLHLSSSAGDISPPSGIVEVMRGLVMSMVSNPID). A helical membrane pass occupies residues 143-163 (ALLKGNYIGILVWAIGLGFAL). Residues 164-179 (RHGNETTKNLVNDMSN) lie on the Cytoplasmic side of the membrane. Residues 180–200 (AVTFMVKLVIHFAPIGIFGLV) form a helical membrane-spanning segment. Over 201-217 (SSTLATTGFSTLWGYAQ) the chain is Periplasmic. Residues 218–238 (LLVVLVGCMLLVALVVNPLLV) form a helical membrane-spanning segment. Residues 239-299 (WWKIRRNPFP…VSIPLGATIN (61 aa)) are Cytoplasmic-facing. A helical membrane pass occupies residues 300-320 (MAGAAITITVLTLAAVNTLGI). The Periplasmic segment spans residues 321–331 (PVDLPTALLLS). A helical membrane pass occupies residues 332–352 (VVASLCACGASGVAGGSLLLI). The Cytoplasmic portion of the chain corresponds to 353 to 414 (PLACNMFGIS…DRLANSALRN (62 aa)).

This sequence belongs to the dicarboxylate/amino acid:cation symporter (DAACS) (TC 2.A.23) family.

Its subcellular location is the cell inner membrane. It carries out the reaction L-serine(in) + Na(+)(in) = L-serine(out) + Na(+)(out). The enzyme catalyses L-threonine(in) + Na(+)(in) = L-threonine(out) + Na(+)(out). Its function is as follows. Involved in the import of serine and threonine into the cell, with the concomitant import of sodium (symport system). The chain is Serine/threonine transporter SstT from Escherichia coli (strain UTI89 / UPEC).